Reading from the N-terminus, the 436-residue chain is GTPase Der (436 aa).

EngA-type G domains follow at residues 4–167 (PTIA…PAQE) and 175–351 (IKFS…ESQN). GTP contacts are provided by residues 10–17 (GRPNVGKS), 57–61 (DTGGI), 119–122 (NKVD), 181–188 (GRPNVGKS), 229–233 (DTAGM), and 294–297 (NKWD). The region spanning 352 to 436 (TRIPSAVLND…PIHLIARKRK (85 aa)) is the KH-like domain.

This sequence belongs to the TRAFAC class TrmE-Era-EngA-EngB-Septin-like GTPase superfamily. EngA (Der) GTPase family. As to quaternary structure, associates with the 50S ribosomal subunit.

Its function is as follows. GTPase that plays an essential role in the late steps of ribosome biogenesis. The polypeptide is GTPase Der (Streptococcus suis (strain 98HAH33)).